Reading from the N-terminus, the 292-residue chain is MRIIKYLTILVISVVILTSCQSSSSQESTKSGEFRIVPTTVALTMTLDKLDLPIVGKPTSYKTLPNRYKDVPEIGQPMEPNVEAVKKLKPTHVLSVSTIKDEMQPFYKQLNMKGYFYDFDSLKGMQKSITQLGDQFNRKAQAKELNDHLNSVKQKIENKAAKQKKHPKVLILMGVPGSYLVATDKSYIGDLVKIAGGENVIKVKDRQYISSNTENLLNINPDIILRLPHGMPEEVKKMFQKEFKQNDIWKHFKAVKNNHVYDLEEVPFGITANVDADKAMTQLYDLFYKDKK.

A signal peptide spans 1–19; it reads MRIIKYLTILVISVVILTS. Cys-20 carries N-palmitoyl cysteine lipidation. A lipid anchor (S-diacylglycerol cysteine) is attached at Cys-20. Residues 35 to 291 enclose the Fe/B12 periplasmic-binding domain; that stretch reads RIVPTTVALT…QLYDLFYKDK (257 aa). 6 residues coordinate heme: Val-41, Ala-42, Ser-60, Tyr-61, Met-78, and His-229.

It belongs to the bacterial solute-binding protein 8 family. Heme b serves as cofactor.

Its subcellular location is the cell membrane. Involved in heme (porphyrin) scavenging. Binds Fe(2+) and Fe(3+) heme but the largest fraction is Fe(2+) heme. Functions as a high-affinity heme binding protein and probably has a role in relaying heme-iron from cell wall-anchored isd proteins receptors to the probable permease IsdF. This is High-affinity heme uptake system protein IsdE (isdE) from Staphylococcus aureus (strain Mu3 / ATCC 700698).